The sequence spans 132 residues: Small ribosomal subunit protein uS8 (132 aa).

The protein belongs to the universal ribosomal protein uS8 family. In terms of assembly, part of the 30S ribosomal subunit. Contacts proteins S5 and S12.

Functionally, one of the primary rRNA binding proteins, it binds directly to 16S rRNA central domain where it helps coordinate assembly of the platform of the 30S subunit. In Bradyrhizobium sp. (strain ORS 278), this protein is Small ribosomal subunit protein uS8.